We begin with the raw amino-acid sequence, 484 residues long: Arachin Ahy-3 (484 aa).

The signal sequence occupies residues M1 to S20. Intrachain disulfides connect C32-C65 and C108-C305. Positions Q35–R253 constitute a Cupin type-1 1 domain. Residues Q208 to F233 form a disordered region. Positions D295 to N298 are excised as a propeptide. The 150-residue stretch at M311 to R460 folds into the Cupin type-1 2 domain. The propeptide occupies M479–A484.

Belongs to the 11S seed storage protein (globulins) family. In terms of assembly, hexamer; each subunit is composed of an acidic and a basic chain derived from a single precursor and linked by a disulfide bond.

The sequence is that of Arachin Ahy-3 from Arachis hypogaea (Peanut).